Consider the following 27-residue polypeptide: Phospholipase A2 1 (27 aa).

This sequence belongs to the phospholipase A2 family. Group I subfamily. Requires Ca(2+) as cofactor. In terms of tissue distribution, expressed by the venom gland.

The protein localises to the secreted. The catalysed reaction is a 1,2-diacyl-sn-glycero-3-phosphocholine + H2O = a 1-acyl-sn-glycero-3-phosphocholine + a fatty acid + H(+). Functionally, snake venom phospholipase A2 (PLA2) that inhibits neuromuscular transmission by blocking acetylcholine release from the nerve termini. PLA2 catalyzes the calcium-dependent hydrolysis of the 2-acyl groups in 3-sn-phosphoglycerides. In Micrurus nigrocinctus (Central American coral snake), this protein is Phospholipase A2 1.